A 234-amino-acid chain; its full sequence is Large ribosomal subunit protein uL1 (234 aa).

The protein belongs to the universal ribosomal protein uL1 family. Part of the 50S ribosomal subunit.

Binds directly to 23S rRNA. The L1 stalk is quite mobile in the ribosome, and is involved in E site tRNA release. Its function is as follows. Protein L1 is also a translational repressor protein, it controls the translation of the L11 operon by binding to its mRNA. The chain is Large ribosomal subunit protein uL1 from Prochlorococcus marinus (strain SARG / CCMP1375 / SS120).